A 419-amino-acid polypeptide reads, in one-letter code: Variant surface glycoprotein YnAT 1.1 (419 aa).

A signal peptide spans 1 to 28 (MKRVLSNVLKAWIFTIVAFHNFSTSVTA). N-linked (GlcNAc...) asparagine glycosylation is found at asparagine 82 and asparagine 358. A disordered region spans residues 369 to 405 (ESSRPPSTDANTSQKGPLQRPEKSGESSHLPSGSSHG). Over residues 372 to 384 (RPPSTDANTSQKG) the composition is skewed to polar residues. An N-linked (GlcNAc...) (high mannose) asparagine glycan is attached at asparagine 379. Over residues 395–405 (SSHLPSGSSHG) the composition is skewed to low complexity. The GPI-anchor amidated serine moiety is linked to residue serine 400. The propeptide at 401–419 (GSSHGTKAIRSILHVALLM) is removed in mature form.

Its subcellular location is the cell membrane. In terms of biological role, VSG forms a coat on the surface of the parasite. The trypanosome evades the immune response of the host by expressing a series of antigenically distinct VSGs from an estimated 1000 VSG genes. This chain is Variant surface glycoprotein YnAT 1.1, found in Trypanosoma congolense.